The sequence spans 334 residues: Beta-hexosaminidase (334 aa).

Residues Asp-62, Arg-70, Arg-131, and 161-162 (KH) each bind substrate. Residue His-174 is the Proton donor/acceptor of the active site. Asp-246 functions as the Nucleophile in the catalytic mechanism.

This sequence belongs to the glycosyl hydrolase 3 family. NagZ subfamily.

The protein localises to the cytoplasm. The catalysed reaction is Hydrolysis of terminal non-reducing N-acetyl-D-hexosamine residues in N-acetyl-beta-D-hexosaminides.. It participates in cell wall biogenesis; peptidoglycan recycling. Plays a role in peptidoglycan recycling by cleaving the terminal beta-1,4-linked N-acetylglucosamine (GlcNAc) from peptide-linked peptidoglycan fragments, giving rise to free GlcNAc, anhydro-N-acetylmuramic acid and anhydro-N-acetylmuramic acid-linked peptides. The chain is Beta-hexosaminidase from Tolumonas auensis (strain DSM 9187 / NBRC 110442 / TA 4).